The chain runs to 243 residues: Small ribosomal subunit protein mS23 (243 aa).

This sequence belongs to the mitochondrion-specific ribosomal protein mS23 family. In terms of assembly, component of the mitochondrial small ribosomal subunit.

Its subcellular location is the mitochondrion. The polypeptide is Small ribosomal subunit protein mS23 (rsm25) (Emericella nidulans (strain FGSC A4 / ATCC 38163 / CBS 112.46 / NRRL 194 / M139) (Aspergillus nidulans)).